We begin with the raw amino-acid sequence, 389 residues long: Phosphopentomutase (389 aa).

Mn(2+)-binding residues include Asp9, Asp282, His287, Asp323, His324, and His335.

It belongs to the phosphopentomutase family. Mn(2+) serves as cofactor.

It is found in the cytoplasm. It carries out the reaction 2-deoxy-alpha-D-ribose 1-phosphate = 2-deoxy-D-ribose 5-phosphate. The catalysed reaction is alpha-D-ribose 1-phosphate = D-ribose 5-phosphate. It participates in carbohydrate degradation; 2-deoxy-D-ribose 1-phosphate degradation; D-glyceraldehyde 3-phosphate and acetaldehyde from 2-deoxy-alpha-D-ribose 1-phosphate: step 1/2. Its function is as follows. Isomerase that catalyzes the conversion of deoxy-ribose 1-phosphate (dRib-1-P) and ribose 1-phosphate (Rib-1-P) to deoxy-ribose 5-phosphate (dRib-5-P) and ribose 5-phosphate (Rib-5-P), respectively. In Pseudothermotoga lettingae (strain ATCC BAA-301 / DSM 14385 / NBRC 107922 / TMO) (Thermotoga lettingae), this protein is Phosphopentomutase.